Here is a 557-residue protein sequence, read N- to C-terminus: Pre-mRNA-processing protein 45 (557 aa).

Disordered stretches follow at residues 1–32 (MALL…TSHA), 208–243 (EQDP…KVSA), and 316–444 (MAEK…MSSD). The span at 16–25 (DFDDEEEDYV) shows a compositional bias: acidic residues. The span at 224-235 (RGPPSPPPPVLH) shows a compositional bias: pro residues. 2 positions are modified to phosphoserine: serine 228 and serine 236. Residues 316–327 (MAEKEKQEKEQR) show a composition bias toward basic and acidic residues. Serine 376 carries the phosphoserine modification. Over residues 386–430 (EAFRRRQELRRERRRQAEKDLRLSRMGAEKRAKLAEKDRPRDVAE) the composition is skewed to basic and acidic residues.

Belongs to the SNW family. In terms of assembly, homodimer. Interacts with cyp1 and the small 23 kDa subunit of the splicing factor U2AF (u2af23). Belongs to the 40S cdc5-associated complex (or cwf complex), a spliceosome sub-complex reminiscent of a late-stage spliceosome composed of the U2, U5 and U6 snRNAs and at least brr2, cdc5, cwf2/prp3, cwf3/syf1, cwf4/syf3, cwf5/ecm2, spp42/cwf6, cwf7/spf27, cwf8, cwf9, cwf10, cwf11, cwf12, prp45/cwf13, cwf14, cwf15, cwf16, cwf17, cwf18, cwf19, cwf20, cwf21, cwf22, cwf23, cwf24, cwf25, cwf26, cyp7/cwf27, cwf28, cwf29/ist3, lea1, msl1, prp5/cwf1, prp10, prp12/sap130, prp17, prp22, sap61, sap62, sap114, sap145, slu7, smb1, smd1, smd3, smf1, smg1 and syf2.

Its subcellular location is the nucleus. In terms of biological role, involved in pre-mRNA splicing. This Schizosaccharomyces pombe (strain 972 / ATCC 24843) (Fission yeast) protein is Pre-mRNA-processing protein 45 (prp45).